The primary structure comprises 85 residues: Teretoxin Tan9.6 (85 aa).

The signal sequence occupies residues 1–21 (MMSKTGALLLTFMILVLFSMA). A propeptide spanning residues 22–52 (AADALGERFEDHEQKIREQDAGVGLLSLMGR) is cleaved from the precursor.

Contains 3 disulfide bonds. Expressed by the venom duct.

The protein localises to the secreted. This Terebra anilis (Auger snail) protein is Teretoxin Tan9.6.